A 425-amino-acid chain; its full sequence is Malate transporter MleP (425 aa).

A run of 11 helical transmembrane segments spans residues 11-31 (GISL…TLLG), 35-55 (LDMV…YFIG), 65-85 (LGGG…FHIV), 96-116 (FMGG…CGSI), 134-154 (IALI…MLIG), 196-216 (IFSQ…IGAL), 246-266 (IKLD…LLMA), 269-289 (ILNK…IVFI), 310-330 (VIMT…LIDL), 339-359 (WQFV…SWFL), and 401-421 (FAQM…GILI).

It belongs to the 2-hydroxycarboxylate transporter (2-HCT) (TC 2.A.24) family.

The protein localises to the cell membrane. The enzyme catalyses (S)-lactate(in) + (S)-malate(out) = (S)-lactate(out) + (S)-malate(in). The catalysed reaction is (R)-lactate(in) + (S)-malate(out) = (R)-lactate(out) + (S)-malate(in). It carries out the reaction glycolate(in) + (S)-malate(out) = glycolate(out) + (S)-malate(in). In terms of biological role, secondary transporter involved in malolactic fermentation. Catalyzes the uptake of divalent malate into the cell coupled to the exit of monovalent lactate, a product of malate degradation (precursor/product exchange). The malate/lactate exchange is electrogenic and results in the generation of a membrane potential. Is highly selective for the S-enantiomer of malate. In the absence of lactate, MleP can also catalyze the proton-dependent transport of malate. In vitro, transports a range of substrates that contain the 2-hydroxycarboxylate motif, HO-CR(2)-COO(-), with a preference for malate, lactate and glycolate. Modification of the OH or the COO(-) groups of the 2-hydroxycarboxylate motif drastically reduces the affinity of the transporter for the substrates, indicating their relevance in substrate recognition. Significant activity is also observed with some 2-oxocarboxylates. Transports only poorly citromalate. Citrate binds to MleP but is not translocated. The protein is Malate transporter MleP of Lactococcus lactis subsp. lactis (strain IL1403) (Streptococcus lactis).